The primary structure comprises 414 residues: Serine hydroxymethyltransferase (414 aa).

(6S)-5,6,7,8-tetrahydrofolate is bound by residues Leu-117 and 121 to 123 (GHL). Lys-226 is subject to N6-(pyridoxal phosphate)lysine.

Belongs to the SHMT family. As to quaternary structure, homodimer. The cofactor is pyridoxal 5'-phosphate.

The protein localises to the cytoplasm. The catalysed reaction is (6R)-5,10-methylene-5,6,7,8-tetrahydrofolate + glycine + H2O = (6S)-5,6,7,8-tetrahydrofolate + L-serine. The protein operates within one-carbon metabolism; tetrahydrofolate interconversion. It functions in the pathway amino-acid biosynthesis; glycine biosynthesis; glycine from L-serine: step 1/1. Catalyzes the reversible interconversion of serine and glycine with tetrahydrofolate (THF) serving as the one-carbon carrier. This reaction serves as the major source of one-carbon groups required for the biosynthesis of purines, thymidylate, methionine, and other important biomolecules. Also exhibits THF-independent aldolase activity toward beta-hydroxyamino acids, producing glycine and aldehydes, via a retro-aldol mechanism. This is Serine hydroxymethyltransferase from Dictyoglomus thermophilum (strain ATCC 35947 / DSM 3960 / H-6-12).